A 989-amino-acid polypeptide reads, in one-letter code: Phosphoenolpyruvate carboxylase (989 aa).

Residues histidine 175 and lysine 630 contribute to the active site.

Belongs to the PEPCase type 1 family. It depends on Mg(2+) as a cofactor.

It catalyses the reaction oxaloacetate + phosphate = phosphoenolpyruvate + hydrogencarbonate. In terms of biological role, forms oxaloacetate, a four-carbon dicarboxylic acid source for the tricarboxylic acid cycle. The chain is Phosphoenolpyruvate carboxylase from Prochlorococcus marinus (strain AS9601).